A 429-amino-acid polypeptide reads, in one-letter code: MATAVRAVGCLPVLCSGTAGHLLRRQHSLNTLPAASILAWKSVLSNGHLSSLGTRDTHPYASLSRALQTQCCISSPSHLMSQQYRPYSFFTKLTADELWKGALAETGAGAKKGRGKRTKKKKRKDLNRGQIIGEGRYGFLWPGLNVPVMKNGTVQTIAQRSKEEQEKVEADVIQQREEWERKKKMKVKRERGWSGNSWGGLSLGPPDPGPSGETYEDFDTRILEVRNVFTMTAKEGRRKSIRVLVAVGNGKGAAGFAIGKATDRMDAFRKAKNRAVHHLYYIERYEDHTIFHDISLRFKRTHIKMKKQPKGYGLRCHRAIITICRLIGIKDMYAKVSGSTNMLSLTQGLFHGLSRQETHQQLADKKGLHVVEIREECGPLPIVVASPRGALRKDPEPDEVPDIKLDWEDVKTAQGMKRCVWSNLKRAAT.

The disordered stretch occupies residues 108–127 (AGAKKGRGKRTKKKKRKDLN). Positions 111–125 (KKGRGKRTKKKKRKD) are enriched in basic residues. The region spanning 218–282 (FDTRILEVRN…NRAVHHLYYI (65 aa)) is the S5 DRBM domain.

It belongs to the universal ribosomal protein uS5 family. In terms of assembly, component of the mitochondrial ribosome small subunit (28S) which comprises a 12S rRNA and about 30 distinct proteins.

Its subcellular location is the mitochondrion. The chain is Small ribosomal subunit protein uS5m (MRPS5) from Pongo abelii (Sumatran orangutan).